A 375-amino-acid polypeptide reads, in one-letter code: Succinyl-diaminopimelate desuccinylase (375 aa).

Position 66 (H66) interacts with Zn(2+). The active site involves D68. D99 is a binding site for Zn(2+). E133 (proton acceptor) is an active-site residue. E134, E162, and H348 together coordinate Zn(2+).

This sequence belongs to the peptidase M20A family. DapE subfamily. In terms of assembly, homodimer. Requires Zn(2+) as cofactor. Co(2+) serves as cofactor.

It carries out the reaction N-succinyl-(2S,6S)-2,6-diaminopimelate + H2O = (2S,6S)-2,6-diaminopimelate + succinate. It functions in the pathway amino-acid biosynthesis; L-lysine biosynthesis via DAP pathway; LL-2,6-diaminopimelate from (S)-tetrahydrodipicolinate (succinylase route): step 3/3. In terms of biological role, catalyzes the hydrolysis of N-succinyl-L,L-diaminopimelic acid (SDAP), forming succinate and LL-2,6-diaminopimelate (DAP), an intermediate involved in the bacterial biosynthesis of lysine and meso-diaminopimelic acid, an essential component of bacterial cell walls. The polypeptide is Succinyl-diaminopimelate desuccinylase (Cronobacter sakazakii (strain ATCC BAA-894) (Enterobacter sakazakii)).